We begin with the raw amino-acid sequence, 269 residues long: Formamidopyrimidine-DNA glycosylase (269 aa).

The active-site Schiff-base intermediate with DNA is the Pro-2. The active-site Proton donor is Glu-3. Catalysis depends on Lys-57, which acts as the Proton donor; for beta-elimination activity. Residues His-90, Arg-109, and Lys-150 each coordinate DNA. The FPG-type zinc-finger motif lies at 235–269 (QVYGREGEPCRVCGTPILAGKHAQRRTYWCRRCQK). Arg-259 serves as the catalytic Proton donor; for delta-elimination activity.

The protein belongs to the FPG family. Monomer. Requires Zn(2+) as cofactor.

It catalyses the reaction Hydrolysis of DNA containing ring-opened 7-methylguanine residues, releasing 2,6-diamino-4-hydroxy-5-(N-methyl)formamidopyrimidine.. The enzyme catalyses 2'-deoxyribonucleotide-(2'-deoxyribose 5'-phosphate)-2'-deoxyribonucleotide-DNA = a 3'-end 2'-deoxyribonucleotide-(2,3-dehydro-2,3-deoxyribose 5'-phosphate)-DNA + a 5'-end 5'-phospho-2'-deoxyribonucleoside-DNA + H(+). Involved in base excision repair of DNA damaged by oxidation or by mutagenic agents. Acts as a DNA glycosylase that recognizes and removes damaged bases. Has a preference for oxidized purines, such as 7,8-dihydro-8-oxoguanine (8-oxoG). Has AP (apurinic/apyrimidinic) lyase activity and introduces nicks in the DNA strand. Cleaves the DNA backbone by beta-delta elimination to generate a single-strand break at the site of the removed base with both 3'- and 5'-phosphates. The polypeptide is Formamidopyrimidine-DNA glycosylase (Cronobacter sakazakii (strain ATCC BAA-894) (Enterobacter sakazakii)).